The sequence spans 104 residues: Toxin-like protein 14 (104 aa).

A signal peptide spans 1–25 (MNTYNARLYIFSLALALVILKGTKC).

In terms of processing, contains 4 disulfide bonds. As to expression, expressed by the venom gland.

It is found in the secreted. This is Toxin-like protein 14 from Urodacus yaschenkoi (Inland robust scorpion).